We begin with the raw amino-acid sequence, 251 residues long: Cell division protein ZapD (251 aa).

The protein belongs to the ZapD family. Interacts with FtsZ.

The protein localises to the cytoplasm. Cell division factor that enhances FtsZ-ring assembly. Directly interacts with FtsZ and promotes bundling of FtsZ protofilaments, with a reduction in FtsZ GTPase activity. In Burkholderia orbicola (strain MC0-3), this protein is Cell division protein ZapD.